We begin with the raw amino-acid sequence, 121 residues long: Small ribosomal subunit protein uS13 (121 aa).

A disordered region spans residues 93–121 (RGLPVRGQNTKNNARTRKGKATAIAGKKK). Over residues 106 to 121 (ARTRKGKATAIAGKKK) the composition is skewed to basic residues.

Belongs to the universal ribosomal protein uS13 family. In terms of assembly, part of the 30S ribosomal subunit. Forms a loose heterodimer with protein S19. Forms two bridges to the 50S subunit in the 70S ribosome.

In terms of biological role, located at the top of the head of the 30S subunit, it contacts several helices of the 16S rRNA. In the 70S ribosome it contacts the 23S rRNA (bridge B1a) and protein L5 of the 50S subunit (bridge B1b), connecting the 2 subunits; these bridges are implicated in subunit movement. Contacts the tRNAs in the A and P-sites. The sequence is that of Small ribosomal subunit protein uS13 from Streptococcus uberis (strain ATCC BAA-854 / 0140J).